The chain runs to 231 residues: MSNTPIELKGSSFTLSVVHLHEAEPKVIHQALKDKIAQAPTFLKHAPVVLNVSALEDPVNWSAMHKAVSATGLRVIGVSGCKDAQLKAEIEKMGLPILTEGKEKAPRPAPAPQAPAQNTMPVTKTRLIDTPVRSGQRIYAPQCDLIVTSHVSAGAELIADGNIHVYGMMRGRALAGASGDRETQIFCTNLMAELVSIAGEYWLSDQIPAEFYGKAARLQLVENALTVQPLN.

Belongs to the MinC family. Interacts with MinD and FtsZ.

Functionally, cell division inhibitor that blocks the formation of polar Z ring septums. Rapidly oscillates between the poles of the cell to destabilize FtsZ filaments that have formed before they mature into polar Z rings. Prevents FtsZ polymerization. The sequence is that of Septum site-determining protein MinC from Shigella flexneri.